Here is a 281-residue protein sequence, read N- to C-terminus: Arylamine N-acetyltransferase / N-hydroxyarylamine O-acetyltransferase (281 aa).

The active-site Acyl-thioester intermediate is Cys69. Catalysis depends on residues His107 and Asp122.

This sequence belongs to the arylamine N-acetyltransferase family. As to quaternary structure, monomer and homodimer.

It localises to the cytoplasm. The enzyme catalyses an arylamine + acetyl-CoA = an N-acetylarylamine + CoA. It catalyses the reaction an N-hydroxyarylamine + acetyl-CoA = an N-acetoxyarylamine + CoA. Its activity is regulated as follows. Inhibited by N-ethylmaleimide and iodoacetamide. Its function is as follows. Catalyzes both the acetyl-CoA-dependent N-acetylation of aromatic amines and the O-acetylation of N-hydroxyarylamines. In vitro, catalyzes the O-acetylation of N-hydroxy-Glu-P-1, and the N-acetylation of isoniazid and 2-aminofluorene. This Salmonella typhimurium (strain LT2 / SGSC1412 / ATCC 700720) protein is Arylamine N-acetyltransferase / N-hydroxyarylamine O-acetyltransferase (nhoA).